A 176-amino-acid chain; its full sequence is Xanthine-guanine phosphoribosyltransferase (176 aa).

Residues 51–52, arginine 88, and 111–119 contribute to the 5-phospho-alpha-D-ribose 1-diphosphate site; these read RG and DDLVDSGKT. GMP is bound at residue arginine 88. Aspartate 112 serves as a coordination point for Mg(2+). Guanine is bound by residues aspartate 115 and isoleucine 158. Positions 115 and 158 each coordinate xanthine. Residues 115 to 119 and 157 to 158 contribute to the GMP site; these read DSGKT and WI.

Belongs to the purine/pyrimidine phosphoribosyltransferase family. XGPT subfamily. Homotetramer. The cofactor is Mg(2+).

The protein localises to the cell inner membrane. It catalyses the reaction GMP + diphosphate = guanine + 5-phospho-alpha-D-ribose 1-diphosphate. The catalysed reaction is XMP + diphosphate = xanthine + 5-phospho-alpha-D-ribose 1-diphosphate. It carries out the reaction IMP + diphosphate = hypoxanthine + 5-phospho-alpha-D-ribose 1-diphosphate. It functions in the pathway purine metabolism; GMP biosynthesis via salvage pathway; GMP from guanine: step 1/1. Its pathway is purine metabolism; XMP biosynthesis via salvage pathway; XMP from xanthine: step 1/1. Purine salvage pathway enzyme that catalyzes the transfer of the ribosyl-5-phosphate group from 5-phospho-alpha-D-ribose 1-diphosphate (PRPP) to the N9 position of the 6-oxopurines guanine and xanthine to form the corresponding ribonucleotides GMP (guanosine 5'-monophosphate) and XMP (xanthosine 5'-monophosphate), with the release of PPi. To a lesser extent, also acts on hypoxanthine. This chain is Xanthine-guanine phosphoribosyltransferase, found in Roseobacter denitrificans (strain ATCC 33942 / OCh 114) (Erythrobacter sp. (strain OCh 114)).